We begin with the raw amino-acid sequence, 155 residues long: Ribosome maturation factor RimP (155 aa).

This sequence belongs to the RimP family.

The protein resides in the cytoplasm. Its function is as follows. Required for maturation of 30S ribosomal subunits. The protein is Ribosome maturation factor RimP of Parasynechococcus marenigrum (strain WH8102).